The sequence spans 349 residues: MRIEEDIKLGFKDVLIRPKRSTLKSRSEVNLIRCFSFKYSTMKWFGIPLIAANMDTIGTFRMAEALSKFNILTAVHKYYSFDEWKNFISVSSKEILEHVIVSIGTSNLDFFKIKKIFSLSSELKYICIDVANGYSEHFVSFLKKIRSFFPDKIICAGNVVTGEMVEELILSGADIVKVGIGPGSVCTTRLKTGIGYPQLSAIIECADAAHGLNGQIISDGGCTVSGDIAKAFGGGADFVMLGGMFAGHTECLGEIIQEKSKKFMLFYGMSSTSAMKRYTGKIPGYRASEGKIVKIPFRGNVDVTVRDILGGLRSSCTYVGAQKLKELTKRTTFIRVSEQENCIFNNFKN.

108–131 (LDFFKIKKIFSLSSELKYICIDVA) lines the NADP(+) pocket. Positions 181 and 183 each coordinate K(+). The active-site Thioimidate intermediate is cysteine 186. An NADP(+)-binding site is contributed by 216-239 (IISDGGCTVSGDIAKAFGGGADFV).

This sequence belongs to the IMPDH/GMPR family. GuaC type 1 subfamily. In terms of assembly, homotetramer.

It catalyses the reaction IMP + NH4(+) + NADP(+) = GMP + NADPH + 2 H(+). Functionally, catalyzes the irreversible NADPH-dependent deamination of GMP to IMP. It functions in the conversion of nucleobase, nucleoside and nucleotide derivatives of G to A nucleotides, and in maintaining the intracellular balance of A and G nucleotides. The polypeptide is GMP reductase (Buchnera aphidicola subsp. Schizaphis graminum (strain Sg)).